Reading from the N-terminus, the 227-residue chain is Esterase Rv3036c (227 aa).

A helical membrane pass occupies residues 3-23; that stretch reads YLIATAVLVAVVLVGWPAAGA.

Belongs to the RsiV family.

The protein localises to the cell membrane. It localises to the secreted. It is found in the cell wall. It carries out the reaction a fatty acid ester + H2O = an aliphatic alcohol + a fatty acid + H(+). It catalyses the reaction an acetyl ester + H2O = an aliphatic alcohol + acetate + H(+). The catalysed reaction is a butanoate ester + H2O = an aliphatic alcohol + butanoate + H(+). The enzyme catalyses a hexanoate ester + H2O = an aliphatic alcohol + hexanoate + H(+). It carries out the reaction a dodecanoate ester + H2O = an aliphatic alcohol + dodecanoate + H(+). It catalyses the reaction a tetradecanoate ester + H2O = an aliphatic alcohol + tetradecanoate + H(+). The catalysed reaction is an octanoate ester + H2O = an aliphatic alcohol + octanoate + H(+). In terms of biological role, hydrolyzes ester substrates carbon chain lengths ranging from C2 to C14. In vitro, acetate (C2), butyrate (C4) and caprylate (C6) are hydrolyzed with high efficiency. Has lower activity against laurate (C12), myristate (C14) and caproate (C8), and weak activity against palmitate (C16). This Mycobacterium tuberculosis (strain ATCC 25618 / H37Rv) protein is Esterase Rv3036c.